We begin with the raw amino-acid sequence, 197 residues long: Syndecan-4 (197 aa).

The signal sequence occupies residues 1–19 (MPLPRAAFLLGLLLAAAAA). Over 20-147 (ESVRETETMD…SIFERTEVLT (128 aa)) the chain is Extracellular. Residues Ser-38, Ser-65, and Ser-67 are each glycosylated (O-linked (Xyl...) (glycosaminoglycan) serine). N-linked (GlcNAc...) asparagine glycans are attached at residues Asn-124 and Asn-136. The chain crosses the membrane as a helical span at residues 148 to 168 (ALIAGGAVGLLFAVFLILLLV). Topologically, residues 169-197 (YRMKKKDEGSYDLGKKPIYKKAPTNEFYA) are cytoplasmic.

This sequence belongs to the syndecan proteoglycan family. In terms of assembly, interacts with SDOS. In terms of processing, O-glycosylated; contains both chondroitin sulfate and heparan sulfate. Ser-38, Ser-65 and Ser-67 can all be modified by either chondroitin sulfate or heparan sulfate, and the protein exists in forms that contain only chondroitin sulfate, only heparan sulfate and both chondroitin sulfate and heparan sulfate.

The protein localises to the membrane. Functionally, cell surface proteoglycan which regulates exosome biogenesis in concert with SDCBP and PDCD6IP. In Gallus gallus (Chicken), this protein is Syndecan-4 (SDC4).